The following is a 297-amino-acid chain: Cytidine deaminase (297 aa).

2 CMP/dCMP-type deaminase domains span residues 54-174 (SSVE…FGPK) and 192-297 (LRGD…YIEV). 95-97 (NQE) serves as a coordination point for substrate. Histidine 108 contributes to the Zn(2+) binding site. Glutamate 110 (proton donor) is an active-site residue. Residues cysteine 135 and cysteine 138 each contribute to the Zn(2+) site.

It belongs to the cytidine and deoxycytidylate deaminase family. In terms of assembly, homodimer. The cofactor is Zn(2+).

It catalyses the reaction cytidine + H2O + H(+) = uridine + NH4(+). The catalysed reaction is 2'-deoxycytidine + H2O + H(+) = 2'-deoxyuridine + NH4(+). Its function is as follows. This enzyme scavenges exogenous and endogenous cytidine and 2'-deoxycytidine for UMP synthesis. The sequence is that of Cytidine deaminase from Actinobacillus pleuropneumoniae serotype 5b (strain L20).